Here is a 491-residue protein sequence, read N- to C-terminus: Acetyl-coenzyme A carboxylase carboxyl transferase subunit beta, chloroplastic (491 aa).

In terms of domain architecture, CoA carboxyltransferase N-terminal spans 224 to 491 (LWIQCENCYG…FFPLNPKKIK (268 aa)). Residues cysteine 228, cysteine 231, cysteine 247, and cysteine 250 each contribute to the Zn(2+) site. Residues 228-250 (CENCYGLNYKKNLKSKINICEQC) form a C4-type zinc finger.

This sequence belongs to the AccD/PCCB family. In terms of assembly, acetyl-CoA carboxylase is a heterohexamer composed of biotin carboxyl carrier protein, biotin carboxylase and 2 subunits each of ACCase subunit alpha and ACCase plastid-coded subunit beta (accD). Zn(2+) serves as cofactor.

It is found in the plastid. Its subcellular location is the chloroplast stroma. It carries out the reaction N(6)-carboxybiotinyl-L-lysyl-[protein] + acetyl-CoA = N(6)-biotinyl-L-lysyl-[protein] + malonyl-CoA. Its pathway is lipid metabolism; malonyl-CoA biosynthesis; malonyl-CoA from acetyl-CoA: step 1/1. Functionally, component of the acetyl coenzyme A carboxylase (ACC) complex. Biotin carboxylase (BC) catalyzes the carboxylation of biotin on its carrier protein (BCCP) and then the CO(2) group is transferred by the transcarboxylase to acetyl-CoA to form malonyl-CoA. This is Acetyl-coenzyme A carboxylase carboxyl transferase subunit beta, chloroplastic from Vitis vinifera (Grape).